Reading from the N-terminus, the 123-residue chain is MAKIKARDLRGKKKEELLKHVDDLKVELSQLRVAKVTGGAASKLSKIRVVRKSIARVLTVINQTQKENLRKFYKGKKYKPLDLRPRKTRAIRRQLTKHEQGLMTKKMQRRSRLYSMRKFAVKA.

It belongs to the universal ribosomal protein uL29 family. Component of the large ribosomal subunit.

Its subcellular location is the cytoplasm. Its function is as follows. Component of the large ribosomal subunit. The ribosome is a large ribonucleoprotein complex responsible for the synthesis of proteins in the cell. The sequence is that of Large ribosomal subunit protein uL29 (rpl35) from Ictalurus punctatus (Channel catfish).